We begin with the raw amino-acid sequence, 376 residues long: UPF0754 membrane protein SSP0953 (376 aa).

Transmembrane regions (helical) follow at residues 4–24 (FLVI…TNVI) and 356–376 (FLGF…AIFV).

This sequence belongs to the UPF0754 family.

The protein localises to the cell membrane. The polypeptide is UPF0754 membrane protein SSP0953 (Staphylococcus saprophyticus subsp. saprophyticus (strain ATCC 15305 / DSM 20229 / NCIMB 8711 / NCTC 7292 / S-41)).